The primary structure comprises 107 residues: Nucleoid-associated protein RBE_0048 (107 aa).

It belongs to the YbaB/EbfC family. Homodimer.

It is found in the cytoplasm. The protein resides in the nucleoid. In terms of biological role, binds to DNA and alters its conformation. May be involved in regulation of gene expression, nucleoid organization and DNA protection. The protein is Nucleoid-associated protein RBE_0048 of Rickettsia bellii (strain RML369-C).